The following is a 2035-amino-acid chain: Ral GTPase-activating protein subunit alpha-1 (2035 aa).

Disordered regions lie at residues 343–384 (LVSR…SSLC) and 477–496 (DGEK…VRNS). The span at 345 to 365 (SREESKNDTVDKVDKSAEPEQ) shows a compositional bias: basic and acidic residues. 2 stretches are compositionally biased toward polar residues: residues 366–384 (SHSN…SSLC) and 486–496 (GTSTSEHVRNS). Phosphoserine is present on residues serine 710 and serine 720. The tract at residues 714-752 (SFSRGWSRDQPGQAPMRQRSATTTGSPGTEKARSIVRQK) is disordered. Threonine 753 carries the phosphothreonine modification. Serine 772 is subject to Phosphoserine. Phosphothreonine is present on threonine 777. Serine 796 carries the post-translational modification Phosphoserine. Residues 807–817 (ERAKVNKEDTS) show a composition bias toward basic and acidic residues. Disordered regions lie at residues 807 to 834 (ERAK…SANV) and 848 to 911 (SGNA…SHSD). Composition is skewed to polar residues over residues 824–833 (NSETGGNSAN) and 849–862 (GNAS…SSPG). Phosphoserine occurs at positions 859, 860, and 863. The segment covering 894 to 911 (SPASAGSSDLMSSDSHSD) has biased composition (low complexity). Residues serine 985, serine 989, serine 993, and serine 999 each carry the phosphoserine modification. Over residues 986-1008 (ESASPVHSALGSRSQTPSPSTLS) the composition is skewed to polar residues. A disordered region spans residues 986–1011 (ESASPVHSALGSRSQTPSPSTLSRAH). Threonine 1001 is modified (phosphothreonine). 2 positions are modified to phosphoserine: serine 1003 and serine 1477. Residues 1326-2035 (FTNKTVAHVA…YHHFPADADH (710 aa)) form a minimal domain that binds to TCF3/E12 region. Residues 1713–1748 (SEKQENDVINAILKQYTEEKEFVEKHFNDLNMKASE) are a coiled coil. The Rap-GAP domain occupies 1795–2003 (LRNLDSRQCR…EERARYLQTI (209 aa)).

As to quaternary structure, component of the heterodimeric RalGAP1 complex with RALGAPB. Heterodimerization is required for activity. Interacts with the HLH region of TCF3/isoform E12. In terms of tissue distribution, expressed during embryogenesis. Expressed in the adult brain, particularly in neurons of the cortex and hippocampus.

It is found in the cytoplasm. Its subcellular location is the nucleus. Functionally, catalytic subunit of the heterodimeric RalGAP1 complex which acts as a GTPase activator for the Ras-like small GTPases RALA and RALB. May interact with the HLH region of TCF3/isoform E12. The polypeptide is Ral GTPase-activating protein subunit alpha-1 (Ralgapa1) (Mus musculus (Mouse)).